Here is a 262-residue protein sequence, read N- to C-terminus: Global transcriptional regulator CodY (262 aa).

The tract at residues 1-159 is GAF domain; sequence MATLLEKTRK…ATTVIGVQLS (159 aa). Positions 207–226 form a DNA-binding region, H-T-H motif; that stretch reads ASVIADKIGITRSVIVNALR.

Belongs to the CodY family.

It localises to the cytoplasm. In terms of biological role, DNA-binding global transcriptional regulator which is involved in the adaptive response to starvation and acts by directly or indirectly controlling the expression of numerous genes in response to nutrient availability. During rapid exponential growth, CodY is highly active and represses genes whose products allow adaptation to nutrient depletion. The protein is Global transcriptional regulator CodY of Lactococcus lactis subsp. cremoris (strain SK11).